Reading from the N-terminus, the 258-residue chain is Phosphate import ATP-binding protein PstB (258 aa).

The region spanning 5-247 is the ABC transporter domain; sequence IDVSGLTAYY…ERIFSNPSVQ (243 aa). Position 37–44 (37–44) interacts with ATP; sequence GPSGCGKS.

It belongs to the ABC transporter superfamily. Phosphate importer (TC 3.A.1.7) family. The complex is composed of two ATP-binding proteins (PstB), two transmembrane proteins (PstC and PstA) and a solute-binding protein (PstS).

Its subcellular location is the cell membrane. The enzyme catalyses phosphate(out) + ATP + H2O = ADP + 2 phosphate(in) + H(+). Part of the ABC transporter complex PstSACB involved in phosphate import. Responsible for energy coupling to the transport system. The protein is Phosphate import ATP-binding protein PstB of Streptomyces avermitilis (strain ATCC 31267 / DSM 46492 / JCM 5070 / NBRC 14893 / NCIMB 12804 / NRRL 8165 / MA-4680).